Here is a 793-residue protein sequence, read N- to C-terminus: Protein translocase subunit SecA 2 (793 aa).

ATP contacts are provided by residues glutamine 77, 95-99 (GEGKT), and aspartate 493.

It belongs to the SecA family. As to quaternary structure, monomer and homodimer. Part of the essential Sec protein translocation apparatus which comprises SecA, SecYEG and auxiliary proteins SecDF. Other proteins may also be involved.

It localises to the cell membrane. Its subcellular location is the cytoplasm. It catalyses the reaction ATP + H2O + cellular proteinSide 1 = ADP + phosphate + cellular proteinSide 2.. Functionally, part of the Sec protein translocase complex. Interacts with the SecYEG preprotein conducting channel. Has a central role in coupling the hydrolysis of ATP to the transfer of proteins into and across the cell membrane, serving as an ATP-driven molecular motor driving the stepwise translocation of polypeptide chains across the membrane. In Streptococcus sanguinis (strain SK36), this protein is Protein translocase subunit SecA 2.